Consider the following 1487-residue polypeptide: Collagen alpha-1(II) chain (1487 aa).

The N-terminal stretch at 1–25 is a signal peptide; that stretch reads MIRLGAPQSLVLLTLLIAAVLRCQG. Residues 26–181 constitute a propeptide, N-terminal propeptide; sequence QDAQEAGSCL…PGLSAGNFAA (156 aa). The 58-residue stretch at 32-89 folds into the VWFC domain; it reads GSCLQNGQRYKDKDVWKPSSCRICVCDTGNVLCDDIICEDPDCLNPEIPFGECCPICP. The disordered stretch occupies residues 96–179; the sequence is SGKLGPKGQK…GPPGLSAGNF (84 aa). 2 stretches are compositionally biased toward basic and acidic residues: residues 104–115 and 132–153; these read QKGEPGDIRDII and PRGDRGDKGEKGAPGPRGRDGE. Positions 157–172 are enriched in pro residues; the sequence is PGNPGPAGPPGPPGPP. Lys190 bears the 5-hydroxylysine mark. Lys190 is a glycosylation site (O-linked (Gal...) hydroxylysine). The interval 191 to 1237 is disordered; the sequence is AGGAQMGVMQ…QREKGPDPMQ (1047 aa). The segment covering 192-203 has biased composition (low complexity); sequence GGAQMGVMQGPM. The segment at 201-1214 is triple-helical region; that stretch reads GPMGPMGPRG…PGPPGPPGPP (1014 aa). Over residues 208–217 the composition is skewed to pro residues; the sequence is PRGPPGPAGA. Low complexity predominate over residues 218–239; the sequence is PGPQGFQGNPGEPGEPGVSGPM. Basic and acidic residues predominate over residues 251-265; the sequence is PGDDGEAGKPGKSGE. Residues Lys287, Lys299, and Lys308 each carry the 5-hydroxylysine modification. O-linked (Gal...) hydroxylysine glycans are attached at residues Lys287, Lys299, and Lys308. Low complexity-rich tracts occupy residues 310–320 and 335–350; these read ESGSPGENGSP and TGPAGAAGARGNDGQP. Residues 360-369 are compositionally biased toward gly residues; that stretch reads GPAGGPGFPG. 2 stretches are compositionally biased toward low complexity: residues 370 to 382 and 403 to 431; these read APGAKGEAGPTGA and PAGASGNPGTDGIPGAKGSAGAPGIAGAP. Lys374 bears the 5-hydroxylysine mark. An O-linked (Gal...) hydroxylysine glycan is attached at Lys374. Positions 433–442 are enriched in pro residues; that stretch reads FPGPRGPPGP. The segment covering 472–485 has biased composition (low complexity); the sequence is ETGPAGPQGAPGPA. Residues Lys608 and Lys620 each carry the 5-hydroxylysine modification. O-linked (Gal...) hydroxylysine glycans are attached at residues Lys608 and Lys620. The span at 622–631 shows a compositional bias: low complexity; the sequence is LAGAPGLRGL. 2 positions are modified to 4-hydroxyproline: Pro659 and Pro668. A 3-hydroxyproline modification is found at Pro670. 2 positions are modified to 4-hydroxyproline: Pro671 and Pro674. Residues 706–736 are compositionally biased toward low complexity; that stretch reads ERGSPGAQGLQGPRGLPGTPGTDGPKGAAGP. The segment covering 764-775 has biased composition (basic and acidic residues); sequence KGDRGDVGEKGP. Low complexity-rich tracts occupy residues 833–848 and 877–914; these read AGFAGPPGADGQPGAK and PTGVTGPKGARGAQGPPGATGFPGAAGRVGPPGANGNP. Pro907 bears the 3-hydroxyproline mark. Pro908, Pro914, and Pro920 each carry 4-hydroxyproline. Residues 962 to 980 show a composition bias toward low complexity; the sequence is DGPSGLDGPPGPQGLAGQR. Positions 1069–1079 are enriched in pro residues; the sequence is APGPPGSPGPA. Residues 1115 to 1129 are compositionally biased toward basic and acidic residues; sequence RGDKGESGEQGERGL. Pro1144 carries the post-translational modification 3-hydroxyproline. Composition is skewed to low complexity over residues 1148–1157 and 1171–1181; these read SGDQGASGPA and PSGKDGSNGIP. Residue Pro1181 is modified to 4-hydroxyproline. Pro1186 carries the post-translational modification 3-hydroxyproline. A 4-hydroxyproline modification is found at Pro1187. Residues 1199–1216 are compositionally biased toward pro residues; that stretch reads VGPPGSPGPPGPPGPPGP. At Pro1201 the chain carries 3-hydroxyproline. A 4-hydroxyproline mark is found at Pro1202 and Pro1205. Pro1207 carries the post-translational modification 3-hydroxyproline. 4-hydroxyproline occurs at positions 1208 and 1211. Position 1213 is a 3-hydroxyproline (Pro1213). At Pro1214 the chain carries 4-hydroxyproline. The nonhelical region (C-terminal) stretch occupies residues 1215–1241; that stretch reads GPGIDMSAFAGLGQREKGPDPMQYMRA. Positions 1253–1487 constitute a Fibrillar collagen NC1 domain; sequence VEVDATLKSL…GVDIGPVCFL (235 aa). 3 disulfides stabilise this stretch: Cys1283–Cys1315, Cys1323–Cys1485, and Cys1393–Cys1438. Residues Asp1301, Asn1303, Gln1304, Cys1306, and Asp1309 each coordinate Ca(2+).

This sequence belongs to the fibrillar collagen family. As to quaternary structure, homotrimers of alpha 1(II) chains. Contains mostly 4-hydroxyproline. Prolines at the third position of the tripeptide repeating unit (G-X-P) are 4-hydroxylated in some or all of the chains. Post-translationally, contains 3-hydroxyproline at a few sites. This modification occurs on the first proline residue in the sequence motif Gly-Pro-Hyp, where Hyp is 4-hydroxyproline. In terms of processing, lysine residues at the third position of the tripeptide repeating unit (G-X-Y) are 5-hydroxylated in some or all of the chains. O-glycosylated on hydroxylated lysine residues. The O-linked glycan consists of a Glc-Gal disaccharide.

Its subcellular location is the secreted. The protein resides in the extracellular space. It localises to the extracellular matrix. Functionally, type II collagen is specific for cartilaginous tissues. It is essential for the normal embryonic development of the skeleton, for linear growth and for the ability of cartilage to resist compressive forces. This is Collagen alpha-1(II) chain from Mus musculus (Mouse).